The following is a 2957-amino-acid chain: Toxin PAU_02230 (2957 aa).

Residues 949–968 (TSVSPAETAQSTPEPLSDFA) form a disordered region. A membrane localization domain that interacts with the inner leaflet of the plasma membrane region spans residues 2115 to 2144 (EWFKHSETGLKGGGPIDDIRKYIARKSAIK). Residues 2115–2449 (EWFKHSETGL…TSTIVTPLAP (335 aa)) form a tyrosine glycosyltransferase PaToxG region. UDP-N-acetyl-alpha-D-glucosamine-binding positions include 2169-2171 (IWI) and 2259-2260 (SD). 2 residues coordinate a divalent metal cation: D2276 and D2278. Residues 2276 to 2279 (DIDD) carry the DxDD motif motif. N2312 serves as a coordination point for UDP-N-acetyl-alpha-D-glucosamine. The interval 2450 to 2672 (KTEMLPPVPS…NYSVNPTAEN (223 aa)) is sseI-like deamidase PaToxD. Residues C2509, H2547, and D2562 each act as for deamidase activity in the active site. Residues 2667–2705 (NPTAENLSPPPPPPIPSHGQVPKTVTPPPPPMRSPLSLS) are disordered.

A divalent metal cation is required as a cofactor.

It localises to the secreted. The protein localises to the host cell membrane. The enzyme catalyses L-tyrosyl-[protein] + UDP-N-acetyl-alpha-D-glucosamine = O-(N-acetyl-alpha-D-glucosaminyl)-L-tyrosyl-[protein] + UDP + H(+). It carries out the reaction L-glutaminyl-[protein] + H2O = L-glutamyl-[protein] + NH4(+). In terms of biological role, toxin that acts on host cells by modifying Rho proteins by tyrosine GlcNAcylation and heterotrimeric G alpha proteins by deamidation. Catalyzes the mono-O-GlcNAcylation of small GTPases of the Rho family (RhoA, RhoB, RhoC, Rac1, Rac2, Rac3, Cdc42) in eukaryotic host cells at the conserved tyrosine residue located in the switch I region (Tyr-32/34), using UDP-N-acetylglucosamine (UDP-GlcNAc) as the sugar donor; other GTPases of the Rho, Ras or Rab families are not substrates. Tyrosine glycosylation inhibits Rho activation and prevents interaction with downstream effectors, resulting in actin disassembly, inhibition of phagocytosis, cell rounding, and toxicity toward insects and mammalian cells. Also catalyzes the deamidation of the catalytic glutamine in heterotrimeric G alpha proteins (Gi, Gq/11), which blocks GTP hydrolysis and arrests the G proteins in a permanent active state leading to activation of Rho GTPases. Thus, PaTox hijacks host GTPase signaling in a bidirectional manner by deamidation-induced activation and glycosylation-induced inactivation of GTPases. The polypeptide is Toxin PAU_02230 (Photorhabdus asymbiotica subsp. asymbiotica (strain ATCC 43949 / 3105-77) (Xenorhabdus luminescens (strain 2))).